The sequence spans 203 residues: Somatotropin (203 aa).

The N-terminal stretch at 1 to 17 is a signal peptide; sequence MDRVVIVLSVLSVAASS. Glutamine 18 carries the pyrrolidone carboxylic acid modification. Position 35 (histidine 35) interacts with Zn(2+). Cysteine 68 and cysteine 176 are oxidised to a cystine. Glutamate 185 lines the Zn(2+) pocket. Cysteine 193 and cysteine 201 are oxidised to a cystine.

Belongs to the somatotropin/prolactin family.

It is found in the secreted. Growth hormone plays an important role in growth control and is involved in the regulation of several anabolic processes. Implicated as an osmoregulatory substance important for seawater adaptation. This chain is Somatotropin (gh), found in Solea senegalensis (Senegalese sole).